The primary structure comprises 446 residues: Serine decarboxylase 3 (446 aa).

His162 provides a ligand contact to substrate. Lys274 bears the N6-(pyridoxal phosphate)lysine mark.

It belongs to the group II decarboxylase family. Pyridoxal 5'-phosphate serves as cofactor.

The enzyme catalyses L-serine + H(+) = ethanolamine + CO2. Catalyzes the biosynthesis of ethanolamine from serine. Decarboxylation of free serine is the major source of ethanolamine production in plants and ethanolamine metabolism is crucial for the synthesis of choline, phosphatidylethanolamine (PE) and phosphatidylcholine (PC), and thus for plant growth. In Oryza sativa subsp. japonica (Rice), this protein is Serine decarboxylase 3.